Here is a 424-residue protein sequence, read N- to C-terminus: L-glutamine:2-deoxy-scyllo-inosose aminotransferase (424 aa).

At Lys-202 the chain carries N6-(pyridoxal phosphate)lysine.

It belongs to the DegT/DnrJ/EryC1 family. L-glutamine:2-deoxy-scyllo-inosose/scyllo-inosose aminotransferase subfamily. The cofactor is pyridoxal 5'-phosphate.

It carries out the reaction 2-deoxy-L-scyllo-inosose + L-glutamine = 2-deoxy-scyllo-inosamine + 2-oxoglutaramate. The catalysed reaction is 3-amino-2,3-dideoxy-scyllo-inosose + L-glutamine = 2-deoxystreptamine + 2-oxoglutaramate. Its pathway is metabolic intermediate biosynthesis; 2-deoxystreptamine biosynthesis; 2-deoxystreptamine from D-glucose 6-phosphate: step 2/4. It functions in the pathway antibiotic biosynthesis; tobramycin biosynthesis. Functionally, catalyzes the PLP-dependent transamination of 2-deoxy-scyllo-inosose (2-DOI) to form 2-deoxy-scyllo-inosamine (2-DOIA) using L-glutamine as the amino donor. Also catalyzes the transamination of 3-amino-2,3-dideoxy-scyllo-inosose (keto-2-DOIA) into 2-deoxystreptamine (2-DOS). The chain is L-glutamine:2-deoxy-scyllo-inosose aminotransferase (tbmB) from Streptoalloteichus tenebrarius (strain ATCC 17920 / DSM 40477 / JCM 4838 / CBS 697.72 / NBRC 16177 / NCIMB 11028 / NRRL B-12390 / A12253. 1 / ISP 5477) (Streptomyces tenebrarius).